Consider the following 287-residue polypeptide: Large ribosomal subunit protein uL2 (287 aa).

A disordered region spans residues 221–287; that stretch reads RGSVMNPCDH…SKRSRGGRDS (67 aa). The span at 258–287 shows a compositional bias: basic residues; that stretch reads KTRKRNKPSNKFVLRKRRKTSKRSRGGRDS.

Belongs to the universal ribosomal protein uL2 family. Part of the 50S ribosomal subunit. Forms a bridge to the 30S subunit in the 70S ribosome.

In terms of biological role, one of the primary rRNA binding proteins. Required for association of the 30S and 50S subunits to form the 70S ribosome, for tRNA binding and peptide bond formation. It has been suggested to have peptidyltransferase activity; this is somewhat controversial. Makes several contacts with the 16S rRNA in the 70S ribosome. The protein is Large ribosomal subunit protein uL2 of Synechococcus sp. (strain RCC307).